The following is a 229-amino-acid chain: Ribonuclease 3 (229 aa).

The RNase III domain maps to 3-125; it reads VNALQEKLGY…LIGGIFLDSN (123 aa). A Mg(2+)-binding site is contributed by glutamate 38. The active site involves aspartate 42. Residues asparagine 111 and glutamate 114 each coordinate Mg(2+). Glutamate 114 is an active-site residue. In terms of domain architecture, DRBM spans 155-225; sequence DPKTRLQEYM…AAKVLEALEH (71 aa).

Belongs to the ribonuclease III family. Homodimer. Requires Mg(2+) as cofactor.

The protein localises to the cytoplasm. The enzyme catalyses Endonucleolytic cleavage to 5'-phosphomonoester.. In terms of biological role, digests double-stranded RNA. Involved in the processing of primary rRNA transcript to yield the immediate precursors to the large and small rRNAs (23S and 16S). Processes some mRNAs, and tRNAs when they are encoded in the rRNA operon. Processes pre-crRNA and tracrRNA of type II CRISPR loci if present in the organism. The chain is Ribonuclease 3 from Blochmanniella pennsylvanica (strain BPEN).